The primary structure comprises 117 residues: MAVYVKFDVPQEMEEKTAEVLSKSEKVKKGANEVTKAVERGTAKLVVLAKDVQPEEIVAHIPIICEEKGIPYTYIATKEDLGKAIGLEVSTAAVAIIAEKDANALKDLVEKINGLKA.

It belongs to the eukaryotic ribosomal protein eL8 family. As to quaternary structure, part of the 50S ribosomal subunit. Probably part of the RNase P complex.

Its subcellular location is the cytoplasm. Functionally, multifunctional RNA-binding protein that recognizes the K-turn motif in ribosomal RNA, the RNA component of RNase P, box H/ACA, box C/D and box C'/D' sRNAs. The chain is Large ribosomal subunit protein eL8 from Methanococcus aeolicus (strain ATCC BAA-1280 / DSM 17508 / OCM 812 / Nankai-3).